The sequence spans 248 residues: PF03932 family protein CutC (248 aa).

This sequence belongs to the CutC family. Homodimer.

The protein resides in the cytoplasm. The polypeptide is PF03932 family protein CutC (Salmonella typhimurium (strain LT2 / SGSC1412 / ATCC 700720)).